The chain runs to 205 residues: MAQLYFYYSAMNAGKSTALLQSSYNYQERGMRTVVYTAEIDDRFGAGKVSSRIGLSSPAKLFNQNSSLFAEIRAEHEQQAIHCVLVDECQFLTRQQVYELSEVVDQLDIPVLCYGLRTDFRGELFIGSQYLLAWSDKLVELKTICFCGRKASMVLRLDQAGRPYNEGEQVVIGGNERYVSVCRKHYKEALEVGSLTAIQERHRHD.

ATP is bound by residues 9-16 (SAMNAGKS) and 87-90 (DECQ). Glu88 functions as the Proton acceptor in the catalytic mechanism. Residues Cys145, Cys147, Cys182, and His185 each contribute to the Zn(2+) site.

It belongs to the thymidine kinase family. Homotetramer.

Its subcellular location is the cytoplasm. The enzyme catalyses thymidine + ATP = dTMP + ADP + H(+). The sequence is that of Thymidine kinase from Shigella dysenteriae serotype 1 (strain Sd197).